A 359-amino-acid chain; its full sequence is Tropomodulin-1 (359 aa).

Positions 36-61 (ELDPDNALLPAGLRQKDQTTKAPTGP) are disordered. Residues 39–138 (PDNALLPAGL…CDIAAILGMH (100 aa)) form a tropomyosin-binding region.

Belongs to the tropomodulin family. Binds to the N-terminus of tropomyosin and to actin. Interacts with FLII.

The protein resides in the cytoplasm. The protein localises to the cytoskeleton. Its function is as follows. Blocks the elongation and depolymerization of the actin filaments at the pointed end. The Tmod/TM complex contributes to the formation of the short actin protofilament, which in turn defines the geometry of the membrane skeleton. This chain is Tropomodulin-1 (Tmod1), found in Rattus norvegicus (Rat).